The sequence spans 281 residues: L-ornithine N(alpha)-acyltransferase (281 aa).

The protein belongs to the acetyltransferase family. OlsB subfamily.

The enzyme catalyses a (3R)-hydroxyacyl-[ACP] + L-ornithine = a lyso-ornithine lipid + holo-[ACP] + H(+). It participates in lipid metabolism. Functionally, catalyzes the first step in the biosynthesis of ornithine lipids, which are phosphorus-free membrane lipids. Catalyzes the 3-hydroxyacyl-acyl carrier protein-dependent acylation of ornithine to form lyso-ornithine lipid (LOL). The polypeptide is L-ornithine N(alpha)-acyltransferase (Brucella abortus (strain 2308)).